The chain runs to 874 residues: Alanine--tRNA ligase (874 aa).

The Zn(2+) site is built by His-564, His-568, Cys-665, and His-669.

This sequence belongs to the class-II aminoacyl-tRNA synthetase family. Zn(2+) serves as cofactor.

The protein localises to the cytoplasm. It catalyses the reaction tRNA(Ala) + L-alanine + ATP = L-alanyl-tRNA(Ala) + AMP + diphosphate. Its function is as follows. Catalyzes the attachment of alanine to tRNA(Ala) in a two-step reaction: alanine is first activated by ATP to form Ala-AMP and then transferred to the acceptor end of tRNA(Ala). Also edits incorrectly charged Ser-tRNA(Ala) and Gly-tRNA(Ala) via its editing domain. This chain is Alanine--tRNA ligase, found in Burkholderia orbicola (strain MC0-3).